Here is a 536-residue protein sequence, read N- to C-terminus: MENKRPIIAVVLSLFVLIGWSYLSEFMGWTPAPAPVEQNATAVQQKASEPVAQPVQTASAPAASSFAPTEGREVKVDTPLYTAVFQSQGGVLKHFRLKKYTESIEEGAPLVELVTPEAAGKAPMGLLLNGQPTWKLAAWQFEGDDLKLDGSGKGELVFVGEMDGVRFERTLSFDPETYLISEKVRLTDTAGVSRDVRLGMTLSTTSLSPEGGAYNLTRMAWYQDGFHQETSADDLRETGVKVDEGVNWGGVMCNYFMAVMAPAEGALPFKGVLEGGVYRSVVENSSLSIASGSSAEFGIGYYIGPKESDRLAAMPYHLDEALNYGWFTFLAKPLVSGLKFFYSYAGNYGVAIIILTILVKLLFWPLSQKSYKSMEQMKKLQPMVQKIKEKYGDDRQRMNQEVMELYKTYKVNPAGGCLPMLLQIPVFLGLYQGLLNAIELRHAPFIAHLPFTDIVWLADLSAKDPFYITPVVMGATMLLQQRLTPAPADPTQAKIMMFMPVVFTFMFLNFPAGLVVYWLVNNVLSIGQQWWMLRKS.

Residues 7–27 traverse the membrane as a helical segment; it reads IIAVVLSLFVLIGWSYLSEFM. The disordered stretch occupies residues 43–70; it reads VQQKASEPVAQPVQTASAPAASSFAPTE. Residues 58 to 68 show a composition bias toward low complexity; that stretch reads ASAPAASSFAP. A run of 3 helical transmembrane segments spans residues 346-366, 415-435, and 495-515; these read GNYGVAIIILTILVKLLFWPL, GGCLPMLLQIPVFLGLYQGLL, and IMMFMPVVFTFMFLNFPAGLV.

This sequence belongs to the OXA1/ALB3/YidC family. Type 1 subfamily. As to quaternary structure, interacts with the Sec translocase complex via SecD. Specifically interacts with transmembrane segments of nascent integral membrane proteins during membrane integration.

It localises to the cell inner membrane. Functionally, required for the insertion and/or proper folding and/or complex formation of integral membrane proteins into the membrane. Involved in integration of membrane proteins that insert both dependently and independently of the Sec translocase complex, as well as at least some lipoproteins. Aids folding of multispanning membrane proteins. The chain is Membrane protein insertase YidC from Oleidesulfovibrio alaskensis (strain ATCC BAA-1058 / DSM 17464 / G20) (Desulfovibrio alaskensis).